The following is a 573-amino-acid chain: NEDD4-binding protein 3-A (573 aa).

Disordered stretches follow at residues 168–216 (LNTM…INSL) and 382–407 (LRGE…EDSK). Composition is skewed to polar residues over residues 184-196 (QPSN…QSES) and 207-216 (DSRQNSINSL). A coiled-coil region spans residues 289-539 (VEDVARQLEE…KEIQSSYREM (251 aa)).

It belongs to the N4BP3 family.

Its subcellular location is the cytoplasmic vesicle. It localises to the cell projection. The protein resides in the axon. The protein localises to the dendrite. Plays a role in axon and dendrite arborization during cranial nerve development. Also important for neural crest migration and early development of other anterior structures including eye, brain and cranial cartilage. The protein is NEDD4-binding protein 3-A of Xenopus laevis (African clawed frog).